The following is a 142-amino-acid chain: Dynein light chain Tctex-type protein 2B (142 aa).

This sequence belongs to the dynein light chain Tctex-type family. In terms of assembly, light chain of the cytoplasmic dynein complex 2, a multisubunit complex composed at least of eleven different proteins. The cytoplasmic dynein 2 complex consists of two catalytic heavy chains (HCs) and a number of non-catalytic subunits presented by intermediate chains (ICs), light intermediate chains (LICs) and light chains (LCs). Among them, a heavy chain (DYNC2H1), two intermediate chains (DYNC2I2 and DYNC2I1), a light intermediate chain (DYNC2LI1), and a light chain (DYNLT2B) are unique to the dynein-2 complex, but a subset of the light chains are also shared by dynein-1 and dynein-2 complexes. Interacts with DYNC2I1. The dimer DYNLT2B-DYNLT1/DYNLT3 interacts with DYNC2I1; this interaction is crucial for retrograde trafficking of ciliary proteins.

Its subcellular location is the dynein axonemal particle. Functionally, acts as one of several non-catalytic accessory components of the cytoplasmic dynein 2 complex (dynein-2 complex), a motor protein complex that drives the movement of cargos along microtubules within cilia and flagella in concert with the intraflagellar transport (IFT) system. Required for proper retrograde ciliary transport. The polypeptide is Dynein light chain Tctex-type protein 2B (Homo sapiens (Human)).